Here is a 378-residue protein sequence, read N- to C-terminus: Diacetylchitobiose uptake system ATP-binding protein MsiK (378 aa).

Residues Val4–Ile236 enclose the ABC transporter domain. Gly38–Ser45 provides a ligand contact to ATP.

Belongs to the ABC transporter superfamily. The DasABC-MsiK complex is composed of two ATP-binding proteins (MsiK), two transmembrane proteins (DasB and DasC) and a solute-binding protein (DasA). The NgcEFG-MsiK complex is composed of two ATP-binding proteins (MsiK), two transmembrane proteins (NgcF and NgcG) and a solute-binding protein (NgcE).

It is found in the cell membrane. Part of the ABC transporter complexes DasABC-MsiK and NgcEFG-MsiK involved in N,N'-diacetylchitobiose ((GlcNAc)2) uptake. Responsible for energy coupling to the transport system. The protein is Diacetylchitobiose uptake system ATP-binding protein MsiK of Streptomyces coelicolor (strain ATCC BAA-471 / A3(2) / M145).